The primary structure comprises 358 residues: Aminomethyltransferase (358 aa).

The protein belongs to the GcvT family. In terms of assembly, the glycine cleavage system is composed of four proteins: P, T, L and H.

The catalysed reaction is N(6)-[(R)-S(8)-aminomethyldihydrolipoyl]-L-lysyl-[protein] + (6S)-5,6,7,8-tetrahydrofolate = N(6)-[(R)-dihydrolipoyl]-L-lysyl-[protein] + (6R)-5,10-methylene-5,6,7,8-tetrahydrofolate + NH4(+). Functionally, the glycine cleavage system catalyzes the degradation of glycine. This is Aminomethyltransferase from Francisella tularensis subsp. tularensis (strain FSC 198).